We begin with the raw amino-acid sequence, 145 residues long: MLSIIQRVNCAKVVVDNQKVADINKGILALVCVEKEDTQQNFEKMADKIIKYRIFEDDAGKMNLSLVDIDAEIILVPQFTLAADTKKGNRPSFSSGCPPEIAKEKFKEFENIFRRKYNKVQTGIFGADMKVFLTNDGPVTFSFKI.

The Gly-cisPro motif, important for rejection of L-amino acids signature appears at 137–138 (GP).

This sequence belongs to the DTD family. Homodimer.

Its subcellular location is the cytoplasm. The enzyme catalyses glycyl-tRNA(Ala) + H2O = tRNA(Ala) + glycine + H(+). The catalysed reaction is a D-aminoacyl-tRNA + H2O = a tRNA + a D-alpha-amino acid + H(+). In terms of biological role, an aminoacyl-tRNA editing enzyme that deacylates mischarged D-aminoacyl-tRNAs. Also deacylates mischarged glycyl-tRNA(Ala), protecting cells against glycine mischarging by AlaRS. Acts via tRNA-based rather than protein-based catalysis; rejects L-amino acids rather than detecting D-amino acids in the active site. By recycling D-aminoacyl-tRNA to D-amino acids and free tRNA molecules, this enzyme counteracts the toxicity associated with the formation of D-aminoacyl-tRNA entities in vivo and helps enforce protein L-homochirality. In Francisella tularensis subsp. holarctica (strain FTNF002-00 / FTA), this protein is D-aminoacyl-tRNA deacylase.